Reading from the N-terminus, the 83-residue chain is Cytochrome b559 subunit alpha (83 aa).

Residues 21 to 35 traverse the membrane as a helical segment; sequence VIHSITIPSLFIAGW. Residue His23 coordinates heme.

It belongs to the PsbE/PsbF family. Heterodimer of an alpha subunit and a beta subunit. PSII is composed of 1 copy each of membrane proteins PsbA, PsbB, PsbC, PsbD, PsbE, PsbF, PsbH, PsbI, PsbJ, PsbK, PsbL, PsbM, PsbT, PsbX, PsbY, PsbZ, Psb30/Ycf12, at least 3 peripheral proteins of the oxygen-evolving complex and a large number of cofactors. It forms dimeric complexes. Heme b is required as a cofactor.

It localises to the plastid. It is found in the chloroplast thylakoid membrane. This b-type cytochrome is tightly associated with the reaction center of photosystem II (PSII). PSII is a light-driven water:plastoquinone oxidoreductase that uses light energy to abstract electrons from H(2)O, generating O(2) and a proton gradient subsequently used for ATP formation. It consists of a core antenna complex that captures photons, and an electron transfer chain that converts photonic excitation into a charge separation. The polypeptide is Cytochrome b559 subunit alpha (Daucus carota (Wild carrot)).